The sequence spans 353 residues: D-alanine--D-alanine ligase (353 aa).

An ATP-grasp domain is found at 141-349; the sequence is KAAFAAAGLP…LEELVSQLVI (209 aa). 176–231 provides a ligand contact to ATP; that stretch reads EAKLKYPCFVKPANLGSSVGISKAQNRNELLIGLDKAASLDRRIVVEQGVSARELE. 3 residues coordinate Mg(2+): Asp302, Glu316, and Asn318.

The protein belongs to the D-alanine--D-alanine ligase family. Mg(2+) is required as a cofactor. It depends on Mn(2+) as a cofactor.

The protein localises to the cytoplasm. The enzyme catalyses 2 D-alanine + ATP = D-alanyl-D-alanine + ADP + phosphate + H(+). Its pathway is cell wall biogenesis; peptidoglycan biosynthesis. Cell wall formation. The protein is D-alanine--D-alanine ligase of Prochlorococcus marinus (strain MIT 9313).